The following is a 223-amino-acid chain: MKFAVLKFPGSNCDRDMYNAALKSDVEAEYVDYRNTSLDGFDGVLIPGGFSFGDYLRSGAMASVAPITEAVKQFAKEGKPVLGVCNGFQILTEIGLLPGALLHNDSHLFVSRNESLRVVNHNTAFTNLYNEDETVVYPVAHGEGHYYCTQDMYDRLEANNQIILKYVNNPNGSFNDIAGIINEQGNVCGMMPHPERAIEPILGTDSGVKLFQAMVNSWREQNV.

A Glutamine amidotransferase type-1 domain is found at 2-223 (KFAVLKFPGS…MVNSWREQNV (222 aa)). Residue Cys85 is the Nucleophile of the active site. Active-site residues include His193 and Glu195.

In terms of assembly, part of the FGAM synthase complex composed of 1 PurL, 1 PurQ and 2 PurS subunits.

Its subcellular location is the cytoplasm. The enzyme catalyses N(2)-formyl-N(1)-(5-phospho-beta-D-ribosyl)glycinamide + L-glutamine + ATP + H2O = 2-formamido-N(1)-(5-O-phospho-beta-D-ribosyl)acetamidine + L-glutamate + ADP + phosphate + H(+). It catalyses the reaction L-glutamine + H2O = L-glutamate + NH4(+). The protein operates within purine metabolism; IMP biosynthesis via de novo pathway; 5-amino-1-(5-phospho-D-ribosyl)imidazole from N(2)-formyl-N(1)-(5-phospho-D-ribosyl)glycinamide: step 1/2. Part of the phosphoribosylformylglycinamidine synthase complex involved in the purines biosynthetic pathway. Catalyzes the ATP-dependent conversion of formylglycinamide ribonucleotide (FGAR) and glutamine to yield formylglycinamidine ribonucleotide (FGAM) and glutamate. The FGAM synthase complex is composed of three subunits. PurQ produces an ammonia molecule by converting glutamine to glutamate. PurL transfers the ammonia molecule to FGAR to form FGAM in an ATP-dependent manner. PurS interacts with PurQ and PurL and is thought to assist in the transfer of the ammonia molecule from PurQ to PurL. In Staphylococcus saprophyticus subsp. saprophyticus (strain ATCC 15305 / DSM 20229 / NCIMB 8711 / NCTC 7292 / S-41), this protein is Phosphoribosylformylglycinamidine synthase subunit PurQ.